Here is a 409-residue protein sequence, read N- to C-terminus: MREEFLEEIPLDAPPEEAKELRTEVMTLNVGPQHPSTHGVLRLMVTLSGEEVLEVVPHIGYLHTGFEKTMEHRTYLQNITYTPRMDYLHSFAHDLAYALAVEKLLGAVVPPRAETIRVILNELSRLASHLVFLGTGLLDLGALTPFFYAFRERETILDLFEWVTGQRFHHNYIRIGGVKEDLPEEFVPELKKFLEVMPHRIDEYEALFAESPIFYERARGVGVIPPEVAIDLGLTGGSLRASGVNYDVRKAYPYSGYETYTFDVPLGERGDVFDRMLVRIREMRESVKIIKQALERLEPGPVRDPNPQITPPPRHLLETSMEAVIYHFKHYTEGFHPPKGEVYVPTESARGELGYYIVSDGGSMPYRVKVRAPSFVNLQSLPYACKGEQVPDMVAIIASLDPVMGDVDR.

The protein belongs to the complex I 49 kDa subunit family. As to quaternary structure, NDH-1 is composed of 14 different subunits. Subunits NuoB, C, D, E, F, and G constitute the peripheral sector of the complex.

It localises to the cell inner membrane. It catalyses the reaction a quinone + NADH + 5 H(+)(in) = a quinol + NAD(+) + 4 H(+)(out). In terms of biological role, NDH-1 shuttles electrons from NADH, via FMN and iron-sulfur (Fe-S) centers, to quinones in the respiratory chain. The immediate electron acceptor for the enzyme in this species is believed to be ubiquinone. Couples the redox reaction to proton translocation (for every two electrons transferred, four hydrogen ions are translocated across the cytoplasmic membrane), and thus conserves the redox energy in a proton gradient. The chain is NADH-quinone oxidoreductase subunit D (nuoD) from Thermus thermophilus (strain ATCC BAA-163 / DSM 7039 / HB27).